Reading from the N-terminus, the 1096-residue chain is MGSSIKINSISIDLAGAANEIDMVKCDHFSMRGFVAETRERDLRKCWPFSEESVSLVDQQSYTLPTLSVPKFRWWHCMSCIKDIDAHGPKDCGLHSNSKAIGNSSVIESKSKFNSLTIIDHEKEKKTDIADNAIEEKVGVNCENDDQTATTFLKKARGRPMGASNVRSKSRKLVSPEQVGNNRSKEKLNKPSMDISSWKEKQNVDQAVTTFGSSEIAGVVEDTPPKATKNHKGIRGLMECDNGSSESINLAMSGLQRRKSRKVRLLSELLGNTKTSGGSNIRKEESALKKESVRGRKRKLLPENNYVSRILSTMGATSENASKSCDSDQGNSESTDSGFDRTPFKGKQRNRRFQVVDEFVPSLPCETSQEGIKEHDADPSKRSTPAHSLFTGNDSVPCPPGTQRTERKLSLPKKKTKKPVIDNGKSTVISFSNGIDGSQVNSHTGPSMNTVSQTRDLLNGKRVGGLFDNRLASDGYFRKYLSQVNDKPITSLHLQDNDYVRSRDAEPNCLRDFSSSSKSSSGGWLRTGVDIVDFRNNNHNTNRSSFSNLKLRYPPSSTEVADLSRVLQKDASGADRKGKTVMVQEHHGAPRSQSHDRKETTTEEQNNDDIPMEIVELMAKNQYERCLPDKEEDVSNKQPSQETAHKSKNALLIDLNETYDNGISLEDNNTSRPPKPCSSNARREEHFPMGRQQNSHDFFPISQPYVPSPFGIFPPTQENRASSIRFSGHNCQWLGNLPTVGNQNPSPSSFRVLRACDTCQSVPNQYREASHPIWPSSMIPPQSQYKPVSLNINQSTNPGTLSQASNNENTWNLNFVAANGKQKCGPNPEFSFGCKHAAGVSSSSSRPIDNFSSESSIPALHLLSLLDPRLRSTTPADQHGNTKFTKRHFPPANQSKEFIELQTGDSSKSAYSTKQIPFDLYSKRFTQEPSRKSFPITPPIGTSSLSFQNASWSPHHQEKKTKRKDTFAPVYNTHEKPVFASSNDQAKFQLLGASNSMMLPLKFHMTDKEKKQKRKAESCNNNASAGPVKNSSGPIVCSVNRNPADFTIPEPGNVYMLTGEHLKVRKRTTFKKKPAVCKQDAMKQTKKPVCPPTQNA.

Disordered regions lie at residues 155-189 (KARGRPMGASNVRSKSRKLVSPEQVGNNRSKEKLN), 274-296 (KTSGGSNIRKEESALKKESVRGR), 315-348 (GATSENASKSCDSDQGNSESTDSGFDRTPFKGKQ), 366-420 (ETSQ…KKPV), 563-612 (LSRV…DIPM), 629-651 (DKEEDVSNKQPSQETAHKSKNAL), 1007-1032 (DKEKKQKRKAESCNNNASAGPVKNSS), and 1070-1096 (FKKKPAVCKQDAMKQTKKPVCPPTQNA). Short sequence motifs (nuclear localization signal) lie at residues 170–177 (SRKLVSPE) and 281–288 (IRKEESAL). Residues 281 to 294 (IRKEESALKKESVR) are compositionally biased toward basic and acidic residues. Polar residues predominate over residues 315 to 337 (GATSENASKSCDSDQGNSESTDS). The tract at residues 337–617 (SGFDRTPFKG…DDIPMEIVEL (281 aa)) is DNA-binding. Basic and acidic residues predominate over residues 371-381 (GIKEHDADPSK). A compositionally biased stretch (polar residues) spans 382–394 (RSTPAHSLFTGND). A compositionally biased stretch (basic and acidic residues) spans 572–601 (SGADRKGKTVMVQEHHGAPRSQSHDRKETT). The tract at residues 866–1096 (LDPRLRSTTP…KPVCPPTQNA (231 aa)) is DNA-binding. Residues 1018 to 1032 (SCNNNASAGPVKNSS) show a composition bias toward polar residues. The Nuclear localization signal 3 signature appears at 1071 to 1078 (KKKPAVCK).

Interacts with MSI1. In terms of tissue distribution, expressed in mature embryo, root tips, cotyledons, leaves, stems, shoot apex, and flower clusters, with highest levels in flowers. The presence in the shoot apical meristem (SAM) is required to maintain vegetative development and prevent early flowering.

The protein localises to the nucleus. Transcription repressor that regulates phase transition during shoot, flower and seeds development. Controls leaves development, shoot architecture and flowering by delaying both the vegetative to reproductive transition and flower initiation. Participates in polycomb group (PcG) protein complex-mediated (including EMF2) silencing of the flower homeotic genes AGAMOUS (AG), PISTILLATA (PI), and APETALA3 (AP3), as well as of some regulatory genes such as ABSCISIC ACID INSENSITIVE3 (ABI3), LONG VEGETATIVE PHASE1 (LOV1), and FLOWERING LOCUS C (FLC) during vegetative development. Required for histone methylation or for maintaining a stable histone methylation (e.g. H3K27me3) pattern of repressed target genes (including genes involved in salt stress response and flower development); this repression is counteracted by ULT1. Can bind non specifically DNA (both double- and single-stranded) and RNA. The chain is Protein EMBRYONIC FLOWER 1 from Arabidopsis thaliana (Mouse-ear cress).